A 352-amino-acid polypeptide reads, in one-letter code: Ribosomal RNA large subunit methyltransferase M (352 aa).

Residues Ser184, 217-220 (APGG), Asp236, Asp256, and Asp272 each bind S-adenosyl-L-methionine. Lys301 (proton acceptor) is an active-site residue.

This sequence belongs to the class I-like SAM-binding methyltransferase superfamily. RNA methyltransferase RlmE family. RlmM subfamily. Monomer.

The protein resides in the cytoplasm. It catalyses the reaction cytidine(2498) in 23S rRNA + S-adenosyl-L-methionine = 2'-O-methylcytidine(2498) in 23S rRNA + S-adenosyl-L-homocysteine + H(+). Catalyzes the 2'-O-methylation at nucleotide C2498 in 23S rRNA. The protein is Ribosomal RNA large subunit methyltransferase M of Pseudomonas paraeruginosa (strain DSM 24068 / PA7) (Pseudomonas aeruginosa (strain PA7)).